A 166-amino-acid chain; its full sequence is Monothiol glutaredoxin-3 (166 aa).

Residues 56–159 (DSTDFEVFLE…STLDEWTHNK (104 aa)) enclose the Glutaredoxin domain. A [2Fe-2S] cluster-binding site is contributed by Cys76.

It belongs to the glutaredoxin family. Monothiol subfamily. As to quaternary structure, homodimer.

The protein localises to the nucleus. Its function is as follows. Monothiol glutaredoxin involved in the biogenesis of iron-sulfur clusters. Binds one iron-sulfur cluster per dimer. The iron-sulfur cluster is bound between subunits, and is complexed by a bound glutathione and a cysteine residue from each subunit. The protein is Monothiol glutaredoxin-3 (grx3) of Schizosaccharomyces pombe (strain 972 / ATCC 24843) (Fission yeast).